The following is a 122-amino-acid chain: Large ribosomal subunit protein bL12 (122 aa).

This sequence belongs to the bacterial ribosomal protein bL12 family. In terms of assembly, homodimer. Part of the ribosomal stalk of the 50S ribosomal subunit. Forms a multimeric L10(L12)X complex, where L10 forms an elongated spine to which 2 to 4 L12 dimers bind in a sequential fashion. Binds GTP-bound translation factors.

In terms of biological role, forms part of the ribosomal stalk which helps the ribosome interact with GTP-bound translation factors. Is thus essential for accurate translation. The chain is Large ribosomal subunit protein bL12 from Vibrio campbellii (strain ATCC BAA-1116).